Reading from the N-terminus, the 446-residue chain is Exodeoxyribonuclease 7 large subunit (446 aa).

The protein belongs to the XseA family. As to quaternary structure, heterooligomer composed of large and small subunits.

It is found in the cytoplasm. It carries out the reaction Exonucleolytic cleavage in either 5'- to 3'- or 3'- to 5'-direction to yield nucleoside 5'-phosphates.. Its function is as follows. Bidirectionally degrades single-stranded DNA into large acid-insoluble oligonucleotides, which are then degraded further into small acid-soluble oligonucleotides. This chain is Exodeoxyribonuclease 7 large subunit, found in Streptococcus pyogenes serotype M3 (strain ATCC BAA-595 / MGAS315).